A 151-amino-acid chain; its full sequence is Arginine repressor (151 aa).

The protein belongs to the ArgR family.

The protein localises to the cytoplasm. It functions in the pathway amino-acid biosynthesis; L-arginine biosynthesis [regulation]. Its function is as follows. Regulates arginine biosynthesis genes. The chain is Arginine repressor from Moorella thermoacetica (strain ATCC 39073 / JCM 9320).